The chain runs to 123 residues: Large ribosomal subunit protein uL14 (123 aa).

It belongs to the universal ribosomal protein uL14 family. Part of the 50S ribosomal subunit. Forms a cluster with proteins L3 and L19. In the 70S ribosome, L14 and L19 interact and together make contacts with the 16S rRNA in bridges B5 and B8.

Functionally, binds to 23S rRNA. Forms part of two intersubunit bridges in the 70S ribosome. The polypeptide is Large ribosomal subunit protein uL14 (Sodalis glossinidius (strain morsitans)).